Reading from the N-terminus, the 243-residue chain is MNTSQDTIYAQPNEHISDFQFDNRVAGVFSDMIRRSVPGYTQIINTIGDFADRFVMPNTQIYDLGCSLGAATLSIRRQIQGRQCRIIAVDNSESMVARCQENLNAYVSDTDVDLVCGDIRDIDIQNASLVVLNFTLQFLPPEDRETLIAKIYQGLNPGGMLVLSEKIRFDDAPIQTLLEEQHLDFKRANGYSELEISQKRSALENVMKPDTLTTHQQRLTRQGFSHFSLWFQCFNFASMVAIK.

Residues Tyr-40, 65–67 (GCS), 90–91 (DN), 118–119 (DI), Asn-133, and Arg-200 contribute to the S-adenosyl-L-methionine site.

This sequence belongs to the class I-like SAM-binding methyltransferase superfamily. Cx-SAM synthase family. In terms of assembly, homodimer.

It carries out the reaction prephenate + S-adenosyl-L-methionine = carboxy-S-adenosyl-L-methionine + 3-phenylpyruvate + H2O. Functionally, catalyzes the conversion of S-adenosyl-L-methionine (SAM) to carboxy-S-adenosyl-L-methionine (Cx-SAM). The chain is Carboxy-S-adenosyl-L-methionine synthase from Shewanella sp. (strain W3-18-1).